Consider the following 301-residue polypeptide: Protease HtpX (301 aa).

Transmembrane regions (helical) follow at residues 4–24 (IGLF…ILSL) and 38–58 (LGNL…VSLF). H147 is a Zn(2+) binding site. E148 is a catalytic residue. Residue H151 coordinates Zn(2+). The next 2 membrane-spanning stretches (helical) occupy residues 155–175 (GDMV…MFFA) and 200–220 (FIIT…IVMW). E226 contacts Zn(2+).

This sequence belongs to the peptidase M48B family. Zn(2+) is required as a cofactor.

The protein resides in the cell inner membrane. This is Protease HtpX from Acinetobacter baumannii (strain AB307-0294).